The following is a 904-amino-acid chain: Shieldin complex subunit 2 (904 aa).

A sufficient for interaction with SHLD3 and MAD2L2 region spans residues 1-60 (MSGGSQVHIFWGAPVAPLKMTVSQDTASLMSVADPWKKIHLLYSQHSLYLKDEKQHKNLE). The interval 1–568 (MSGGSQVHIF…AYVSSKHSYL (568 aa)) is interaction with ASTE1. The interval 721 to 891 (KCSGVVLIQA…LQQDFSLLDF (171 aa)) is mediates interaction with SHLD1.

Belongs to the SHLD2 family. As to quaternary structure, component of the shieldin complex, consisting of SHLD1, SHLD2, SHLD3 and MAD2L2/REV7. Within the complex, SHLD2 forms a scaffold which interacts with a SHLD3-MAD2L2 subcomplex via its N-terminus, and with SHLD1 via its C-terminus. Interacts with TP53BP1. Interacts with RIF1. Interacts with ASTE1.

Its subcellular location is the chromosome. Component of the shieldin complex, which plays an important role in repair of DNA double-stranded breaks (DSBs). During G1 and S phase of the cell cycle, the complex functions downstream of TP53BP1 to promote non-homologous end joining (NHEJ) and suppress DNA end resection. Mediates various NHEJ-dependent processes including immunoglobulin class-switch recombination, and fusion of unprotected telomeres. The polypeptide is Shieldin complex subunit 2 (Pongo abelii (Sumatran orangutan)).